We begin with the raw amino-acid sequence, 195 residues long: ATP-dependent Clp protease proteolytic subunit (195 aa).

Ser101 serves as the catalytic Nucleophile. His126 is an active-site residue.

Belongs to the peptidase S14 family. In terms of assembly, component of the chloroplastic Clp protease core complex.

The protein localises to the plastid. The protein resides in the chloroplast stroma. The catalysed reaction is Hydrolysis of proteins to small peptides in the presence of ATP and magnesium. alpha-casein is the usual test substrate. In the absence of ATP, only oligopeptides shorter than five residues are hydrolyzed (such as succinyl-Leu-Tyr-|-NHMec, and Leu-Tyr-Leu-|-Tyr-Trp, in which cleavage of the -Tyr-|-Leu- and -Tyr-|-Trp bonds also occurs).. In terms of biological role, cleaves peptides in various proteins in a process that requires ATP hydrolysis. Has a chymotrypsin-like activity. Plays a major role in the degradation of misfolded proteins. The polypeptide is ATP-dependent Clp protease proteolytic subunit (Oltmannsiellopsis viridis (Marine flagellate)).